A 266-amino-acid polypeptide reads, in one-letter code: GRIP and coiled-coil domain-containing protein C365.11 (266 aa).

A compositionally biased stretch (polar residues) spans 1-13 (METTVSAKNSLEN). Positions 1–88 (METTVSAKNS…LDEKVKELEN (88 aa)) are disordered. S10 is modified (phosphoserine). A compositionally biased stretch (basic residues) spans 36-49 (ASKKKRKNRKKKKN). Positions 63-88 (EEQRSGSIDSKDKEKPLDEKVKELEN) are enriched in basic and acidic residues. Residues 73-188 (KDKEKPLDEK…ESVKSHESEL (116 aa)) adopt a coiled-coil conformation. Residues S202 and S204 each carry the phosphoserine modification. The region spanning 216–264 (ISKELINKEYARNVLLQFLENHEHRDKILPILSTALDLEEVHQHLILKN) is the GRIP domain.

It localises to the cytoplasm. This is GRIP and coiled-coil domain-containing protein C365.11 from Schizosaccharomyces pombe (strain 972 / ATCC 24843) (Fission yeast).